A 254-amino-acid chain; its full sequence is Large ribosomal subunit protein uL2 (254 aa).

It belongs to the universal ribosomal protein uL2 family.

The chain is Large ribosomal subunit protein uL2 (RPL2) from Candida glabrata (strain ATCC 2001 / BCRC 20586 / JCM 3761 / NBRC 0622 / NRRL Y-65 / CBS 138) (Yeast).